A 383-amino-acid chain; its full sequence is ATP phosphoribosyltransferase regulatory subunit (383 aa).

The protein belongs to the class-II aminoacyl-tRNA synthetase family. HisZ subfamily. Heteromultimer composed of HisG and HisZ subunits.

It is found in the cytoplasm. It participates in amino-acid biosynthesis; L-histidine biosynthesis; L-histidine from 5-phospho-alpha-D-ribose 1-diphosphate: step 1/9. In terms of biological role, required for the first step of histidine biosynthesis. May allow the feedback regulation of ATP phosphoribosyltransferase activity by histidine. In Lactiplantibacillus plantarum (strain ATCC BAA-793 / NCIMB 8826 / WCFS1) (Lactobacillus plantarum), this protein is ATP phosphoribosyltransferase regulatory subunit.